We begin with the raw amino-acid sequence, 291 residues long: Exosome complex exonuclease RRP42 (291 aa).

Alanine 2 carries the post-translational modification N-acetylalanine. Position 116 is an N6-acetyllysine (lysine 116).

Belongs to the RNase PH family. Component of the RNA exosome core complex (Exo-9), composed of EXOSC1, EXOSC2, EXOSC3, EXOSC4, EXOSC5, EXOSC6, EXOSC7, EXOSC8 and EXOSC9; within the complex interacts with EXOSC2 and EXOSC4. The catalytically inactive RNA exosome core complex (Exo-9) associates with the catalytic subunit EXOSC10/RRP6. Exo-9 may associate with DIS3 to form the nucleolar exosome complex, or DIS3L to form the cytoplasmic exosome complex. Exo-9 is formed by a hexameric base ring consisting of the heterodimers EXOSC4-EXOSC9, EXOSC5-EXOSC8 and EXOSC6-EXOSC7, and a cap ring consisting of EXOSC1, EXOSC2 and EXOSC3. The RNA exosome complex associates with cofactors C1D/RRP47, MPHOSPH6/MPP6 and MTREX/MTR4. Interacts with ZC3HAV1. Interacts with DIS3; the interaction is direct.

The protein localises to the nucleus. The protein resides in the nucleolus. It localises to the cytoplasm. In terms of biological role, non-catalytic component of the RNA exosome complex which has 3'-&gt;5' exoribonuclease activity and participates in a multitude of cellular RNA processing and degradation events. In the nucleus, the RNA exosome complex is involved in proper maturation of stable RNA species such as rRNA, snRNA and snoRNA, in the elimination of RNA processing by-products and non-coding 'pervasive' transcripts, such as antisense RNA species and promoter-upstream transcripts (PROMPTs), and of mRNAs with processing defects, thereby limiting or excluding their export to the cytoplasm. The RNA exosome may be involved in Ig class switch recombination (CSR) and/or Ig variable region somatic hypermutation (SHM) by targeting AICDA deamination activity to transcribed dsDNA substrates. In the cytoplasm, the RNA exosome complex is involved in general mRNA turnover and specifically degrades inherently unstable mRNAs containing AU-rich elements (AREs) within their 3' untranslated regions, and in RNA surveillance pathways, preventing translation of aberrant mRNAs. It seems to be involved in degradation of histone mRNA. The catalytic inactive RNA exosome core complex of 9 subunits (Exo-9) is proposed to play a pivotal role in the binding and presentation of RNA for ribonucleolysis, and to serve as a scaffold for the association with catalytic subunits and accessory proteins or complexes. The polypeptide is Exosome complex exonuclease RRP42 (Exosc7) (Mus musculus (Mouse)).